The sequence spans 332 residues: Glycerol-3-phosphate dehydrogenase [NAD(P)+] (332 aa).

The NADPH site is built by Ser-11, Phe-12, Lys-32, and Lys-106. Residues Lys-106, Gly-137, and Ser-139 each coordinate sn-glycerol 3-phosphate. An NADPH-binding site is contributed by Ala-141. Sn-glycerol 3-phosphate-binding residues include Lys-192, Asp-245, Ser-255, Arg-256, and Asn-257. The Proton acceptor role is filled by Lys-192. NADPH is bound at residue Arg-256. NADPH contacts are provided by Val-280 and Glu-282.

This sequence belongs to the NAD-dependent glycerol-3-phosphate dehydrogenase family.

The protein resides in the cytoplasm. It carries out the reaction sn-glycerol 3-phosphate + NAD(+) = dihydroxyacetone phosphate + NADH + H(+). It catalyses the reaction sn-glycerol 3-phosphate + NADP(+) = dihydroxyacetone phosphate + NADPH + H(+). The protein operates within membrane lipid metabolism; glycerophospholipid metabolism. In terms of biological role, catalyzes the reduction of the glycolytic intermediate dihydroxyacetone phosphate (DHAP) to sn-glycerol 3-phosphate (G3P), the key precursor for phospholipid synthesis. The protein is Glycerol-3-phosphate dehydrogenase [NAD(P)+] of Staphylococcus carnosus (strain TM300).